The primary structure comprises 949 residues: Coiled-coil domain-containing protein 66 (949 aa).

Threonine 115 and threonine 121 each carry phosphothreonine. Serine 369 is modified (phosphoserine). Residues 474–558 (QVEEKCRKKQ…EQRIRELAQK (85 aa)) adopt a coiled-coil conformation. The mediates localization to cilia, centrosomes and spindle microtubules and the interaction with PCM1, CEP290, CEP104 and CSPP1 stretch occupies residues 570–949 (GVDTIQIEYN…NQEENFGSSF (380 aa)). Serine 606 carries the phosphoserine modification. 2 disordered regions span residues 691 to 714 (QTKH…KRYI) and 789 to 809 (SFSK…RTQQ).

As to quaternary structure, homodimer; disulfide-linked. Interacts with CEP290. Interacts with PCM1. Interacts with ARMC9, TOGARAM1, CSPP1 and CEP104. Interacts with CDK5RAP2, CEP152, CEP192, TBG1 and PRC1.

The protein resides in the cytoplasm. The protein localises to the cytoskeleton. It is found in the microtubule organizing center. Its subcellular location is the centrosome. It localises to the centriolar satellite. The protein resides in the cell projection. The protein localises to the cilium. It is found in the cilium basal body. Its subcellular location is the cilium axoneme. It localises to the photoreceptor inner segment. The protein resides in the photoreceptor outer segment. Its function is as follows. Microtubule-binding protein required for ciliogenesis. May function in ciliogenesis by mediating the transport of proteins like BBS4 to the cilium, but also through the organization of the centriolar satellites. Required for the assembly of signaling-competent cilia with proper structure and length. Mediates this function in part by regulating transition zone assembly and basal body recruitment of the IFT-B complex. Cooperates with the ciliopathy proteins CSPP1 and CEP104 during cilium length regulation. Plays two important roles during cell division. First, is required for mitotic progression via regulation of spindle assembly, organization and orientation, levels of spindle microtubules (MTs), kinetochore-fiber integrity, and chromosome alignment. Second, functions during cytokinesis in part by regulating assembly and organization of central spindle and midbody MTs Plays a role in retina morphogenesis and/or homeostasis. The polypeptide is Coiled-coil domain-containing protein 66 (Pongo abelii (Sumatran orangutan)).